A 409-amino-acid polypeptide reads, in one-letter code: LysM domain-containing GPI-anchored protein LYP6 (409 aa).

A signal peptide spans 1-27 (MAGWPAAEAAGALVVAILAAAAGGAAG). Disulfide bonds link Cys34/Cys100, Cys40/Cys166, Cys98/Cys164, and Cys100/Cys166. The LysM 1 domain maps to 110-160 (VRYSARPADTLASVADVVFAGLASADQIRTANGLSAEDPDAPLDAGATLVV). Asn168 carries N-linked (GlcNAc...) asparagine glycosylation. In terms of domain architecture, LysM 2 spans 179-222 (LSYVVRVGDTVQSIAATHATTVTDISNVNAMGSPIVAPGDILAI). 2 disulfides stabilise this stretch: Cys227/Cys259 and Cys254/Cys282. Asn244 is a glycosylation site (N-linked (GlcNAc...) asparagine). N-linked (GlcNAc...) asparagine glycosylation is found at Asn291, Asn302, and Asn313. The tract at residues 353 to 387 (SPAPGAGEAGGDIPGFPGSSNVSPANGPSGSVSQA) is disordered. Residues 370–387 (GSSNVSPANGPSGSVSQA) are compositionally biased toward polar residues. Ala387 carries the GPI-anchor amidated alanine lipid modification. The propeptide at 388–409 (ASVNRPHQIVALILSVALYFQM) is removed in mature form.

Interacts with LYP4. Interacts with CERK1. Interacts with CEBIP. In terms of tissue distribution, expressed in roots and leaves.

It is found in the cell membrane. In terms of biological role, functions in innate immunity. Functions as a pattern recognition receptor (PRR), sensing bacterial peptidoglycan (PGN) and fungal chitin at the cell surface. Involved in resistance against the bacterial pathogen Xanthomonas oryzae pv. oryzae (Xoo) and the fungal pathogen Magnaporthe oryzae. Binds PGN and fungal chitin in vitro. Involved in microbe-associated molecular patterns (MAMPs) perception and participates in the activation of defense genes against the bacterial pathogen Xanthomonas oryzae pv. oryzicola (Xoc) or the fungal pathogen Magnaporthe oryzae. The protein is LysM domain-containing GPI-anchored protein LYP6 of Oryza sativa subsp. japonica (Rice).